We begin with the raw amino-acid sequence, 183 residues long: NEDD8-conjugating enzyme Ubc12 (183 aa).

Met1 bears the N-acetylmethionine mark. Residues 1–28 are disordered; the sequence is MIKLFSLKQQKKEEESAGGTKGSSKKAS. A UBC core domain is found at 29 to 173; the sequence is AAQLRIQKDI…VQRSMRGGYI (145 aa). The Glycyl thioester intermediate role is filled by Cys111.

This sequence belongs to the ubiquitin-conjugating enzyme family. UBC12 subfamily. The acetylation of Met-1 increases affinity for DCUN1D1 by about 2 orders of magnitude and is crucial for NEDD8 transfer to cullins.

It catalyses the reaction [E1 NEDD8-activating enzyme]-S-[NEDD8 protein]-yl-L-cysteine + [E2 NEDD8-conjugating enzyme]-L-cysteine = [E1 NEDD8-activating enzyme]-L-cysteine + [E2 NEDD8-conjugating enzyme]-S-[NEDD8-protein]-yl-L-cysteine.. The protein operates within protein modification; protein neddylation. Its function is as follows. Accepts the ubiquitin-like protein NEDD8 from the UBA3-NAE1 E1 complex and catalyzes its covalent attachment to other proteins. The specific interaction with the E3 ubiquitin ligase rbx1, but not rbx2, suggests that the rbx1-ube2m complex neddylates specific target proteins, such as cul1, cul2, cul3 and cul4. Involved in cell proliferation. The chain is NEDD8-conjugating enzyme Ubc12 (ube2m) from Xenopus laevis (African clawed frog).